Here is a 452-residue protein sequence, read N- to C-terminus: Sensor histidine kinase HprS (452 aa).

The Cytoplasmic portion of the chain corresponds to 1–9; sequence MKRLSITVR. Residues 10 to 30 form a helical membrane-spanning segment; that stretch reads LTLLFILLLSVAGAGIVWTLY. At 31–158 the chain is on the periplasmic side; sequence NGLASELKWR…ARHNMLEQYK (128 aa). Residues 159 to 179 traverse the membrane as a helical segment; it reads INSIIICIVAIVLCSVLSPLL. The Cytoplasmic portion of the chain corresponds to 180-452; it reads IRTGLREIKK…VFRITLPQRN (273 aa). The HAMP domain occupies 181-234; it reads RTGLREIKKLSGVTEALNYNDSREPVEVSALPRELKPLGQALNKMHHALVKDFE. A Histidine kinase domain is found at 242 to 452; it reads DLAHELRTPI…VFRITLPQRN (211 aa). Residue H245 is modified to Phosphohistidine; by autocatalysis.

Autophosphorylated.

The protein resides in the cell inner membrane. It carries out the reaction ATP + protein L-histidine = ADP + protein N-phospho-L-histidine.. Functionally, member of a two-component regulatory system HprR/HprS involved in response to hydrogen peroxide. Senses H(2)O(2), maybe via the redox state of the membrane. Activates HprR by phosphorylation. Can also phosphorylate CusR. The polypeptide is Sensor histidine kinase HprS (Escherichia coli (strain K12)).